We begin with the raw amino-acid sequence, 416 residues long: Transcription factor LATE FLOWERING (416 aa).

Low complexity-rich tracts occupy residues 176-186 and 200-212; these read STTTTTTALPP and TSPT…TSET. Disordered stretches follow at residues 176-226 and 276-311; these read STTT…AGGS and LGGP…QTVA. Positions 303–316 are basic motif; degenerate; the sequence is ISSDPQTVAARLRR. The bHLH domain maps to 303–352; it reads ISSDPQTVAARLRRERVSERLRVLQRLVPGGSKMDTATMLDEAASYLKFL. The interval 317-352 is helix-loop-helix motif; that stretch reads ERVSERLRVLQRLVPGGSKMDTATMLDEAASYLKFL.

It belongs to the bHLH protein family. In terms of assembly, interacts with PIL13 and PIL15.

It localises to the nucleus. Functionally, transcription factor involved in the negative regulation of flowering. May be involved in the repression of the flowering factor GI and HD1 by interacting with PIL13 and PIL15 and competing with PRR1. Possesses transactivation activity in yeast. This chain is Transcription factor LATE FLOWERING, found in Oryza sativa subsp. japonica (Rice).